The chain runs to 399 residues: Elongation factor Tu (399 aa).

One can recognise a tr-type G domain in the interval 10-209 (KPHVNIGTIG…KVDEYIPTPV (200 aa)). The segment at 19 to 26 (GHVDHGKT) is G1. Residue 19 to 26 (GHVDHGKT) participates in GTP binding. Thr26 provides a ligand contact to Mg(2+). Residues 60–64 (GITIA) are G2. Positions 81–84 (DCPG) are G3. GTP contacts are provided by residues 81–85 (DCPGH) and 136–139 (NKAD). The segment at 136–139 (NKAD) is G4. The tract at residues 174-176 (SAL) is G5.

It belongs to the TRAFAC class translation factor GTPase superfamily. Classic translation factor GTPase family. EF-Tu/EF-1A subfamily. As to quaternary structure, monomer.

The protein resides in the cytoplasm. The catalysed reaction is GTP + H2O = GDP + phosphate + H(+). GTP hydrolase that promotes the GTP-dependent binding of aminoacyl-tRNA to the A-site of ribosomes during protein biosynthesis. In Campylobacter curvus (strain 525.92), this protein is Elongation factor Tu.